Here is a 230-residue protein sequence, read N- to C-terminus: MAAAAAAAAQRLLAASTKIIGVGRNYVAHAKELGNPVPKEPLLFLKPTSSFLHAGVAGAAIEVPGPVESLHHEVELAVVLSQRARDVPEASAMDFVGGYALALDMTAREFQSAAKSAGLPWTLCKAQDTFTPISAVIPKSAVANPNDLELWLKVDDELRQKGSTSDMIFKIPSLISYISSIMTLMEGDVILTGTPEGVGPVRPGQKIKAGITGLVDVEFDVQKRKRSFST.

Residues 1-26 constitute a mitochondrion transit peptide; it reads MAAAAAAAAQRLLAASTKIIGVGRNY. Residues E73, E75, and D104 each coordinate Mg(2+).

The protein belongs to the FAH family. Mg(2+) serves as cofactor. Mn(2+) is required as a cofactor.

It is found in the mitochondrion. It carries out the reaction oxaloacetate = enol-oxaloacetate. Functionally, tautomerase that converts enol-oxaloacetate, a strong inhibitor of succinate dehydrogenase, to the physiological keto form of oxaloacetate. The chain is Oxaloacetate tautomerase FAHD1, mitochondrial from Oryza sativa subsp. japonica (Rice).